The following is a 513-amino-acid chain: MFDIYDYSPRLVALGLIAATIIIYSFTLTVYRLFFHPLARIPGPKLCAITGWYEIFWDVLVGGQFTFKIEEWHKTYGPVMRIGPNEVHFNDPDFYNELYPTIGATYEKPAQWRWRFGCGTAIFDTIGHEHHAQRKAPVAAFFSRQKILQFSGFIQDQTDILVKRIRDDHRGQVICANEAFDALTMDIIGYYAFGLSYNSLQYPGFKAPYRNVTADIARMVHVGAHFPWVFTILNALPEKYITRLLPPMSKIFMFRKEISSQIRRIKDNKEYLDKNVNEHRTVFHEILNSNQPACELNEGRIYHEALSLVGAALETSKRTTALAVYYILATPGVEDNLRAELTAAMPDKTKNLSVPELEALPYLNAVIKEALRLAIGVSQRMRRYSPTETITYKDYTIPPNTVFGMCHWEQLRDARIWDRPTEFLPERWLAEQPLALNGQPLNKYFVPFHRGPRMCLGKEFGMAQLNIGLATLFRQDDIKLELYETDRKDVDVVADFFVPLTVKESQGVRVLVK.

The helical transmembrane segment at Leu-11 to Tyr-31 threads the bilayer. N-linked (GlcNAc...) asparagine glycans are attached at residues Asn-211 and Asn-351. Cys-455 is a binding site for heme.

It belongs to the cytochrome P450 family. Heme serves as cofactor.

Its subcellular location is the membrane. Its pathway is mycotoxin biosynthesis. In terms of biological role, cytochrome P450 monooxygenase; part of the gene cluster that mediates the biosynthesis of brefeldin A (BFA), a protein transport inhibitor that shows antiviral, antifungal, and antitumor properties. The proposed biosynthesis of BFA involves formation of an acyclic polyketide chain that is differentially tailored throughout the backbone. The highly reducing polyketide synthase Bref-PKS is proposed to synthesize the precisely reduced octaketide precursor, which could then be directly offloaded by the thiohydrolase enzyme Bref-TH followed by a cytochrome P450 monooxygenase-mediated formation of the cyclopentane ring and macrocyclization to afford 7-deoxy BFA. Alternatively, the first ring annulation can also occur on the ACP-tethered intermediate before the thiohydrolase release and lactonization. The C7-hydroxylation by another cytochrome P450 monooxygenase is believed to be the final step in the process to obtain the final structure of BFA. In addition to the HRPKS Bref-PKS and the thiohydrolase Bref-TH, the brefeldin A biosynthesis cluster contains 4 cytochrome p450 monooxygenases (called orf3 to orf6), as well a the probable cluster-specific transcription regulator orf8. The chain is Cytochrome P450 monooxygenase orf3 from Eupenicillium brefeldianum (Penicillium brefeldianum).